A 183-amino-acid polypeptide reads, in one-letter code: Ubiquitin-conjugating enzyme E2-21 kDa (183 aa).

Positions threonine 17–arginine 179 constitute a UBC core domain. Residue cysteine 115 is the Glycyl thioester intermediate of the active site.

The protein belongs to the ubiquitin-conjugating enzyme family.

The protein localises to the peroxisome. It carries out the reaction S-ubiquitinyl-[E1 ubiquitin-activating enzyme]-L-cysteine + [E2 ubiquitin-conjugating enzyme]-L-cysteine = [E1 ubiquitin-activating enzyme]-L-cysteine + S-ubiquitinyl-[E2 ubiquitin-conjugating enzyme]-L-cysteine.. It functions in the pathway protein modification; protein ubiquitination. Functionally, catalyzes the covalent attachment of ubiquitin to other proteins. Essential for peroxisome biogenesis. Required for UBC4-independent ubiquitination of PEX5. This chain is Ubiquitin-conjugating enzyme E2-21 kDa (PEX4), found in Saccharomyces cerevisiae (strain ATCC 204508 / S288c) (Baker's yeast).